We begin with the raw amino-acid sequence, 494 residues long: Non-structural protein 1 (494 aa).

Residues methionine 1 to leucine 83 are RNA-binding. The interval cysteine 44 to histidine 81 is zinc-binding domain. Positions lysine 84–asparagine 178 are important for cytoskeleton localization. An interaction with host IRF3 region spans residues lysine 320–aspartate 494. Positions leucine 485–serine 488 match the pLxIS motif motif.

The protein belongs to the rotavirus NSP1 family. Interacts (via C-terminus) with host IRF3; this interaction leads to IRF3 degradation. Interacts with host IRF7; this interaction leads to IRF7 degradation. Interacts with host CUL1 and CUL3.

Its subcellular location is the host cytoplasm. The protein resides in the host cytoskeleton. In terms of biological role, plays a role in the inhibition of host innate immunity by inducing the degradation of key host factors required to activate interferon production such as IRF3, IRF5 or IRF7. Associates with components of cullin RING ligases (CRLs) including CUL1 or CUL3, which are essential multisubunit ubiquitination complexes, to modulate their activities. This chain is Non-structural protein 1, found in Rotavirus A (strain RVA/Monkey/United States/RRV/1975/G3P5B[3]) (RV-A).